The sequence spans 336 residues: DNA repair protein RAD51 homolog B (336 aa).

The HhH domain occupies 45–74 (TVEAVAYAPKKELLNIKGISEAKAEKILAE). Position 124-131 (124-131 (GEFRTGKT)) interacts with ATP. The Nuclear export signal signature appears at 242 to 257 (LARFLRMLLRLADEFG).

This sequence belongs to the RecA family. RAD51 subfamily. In terms of assembly, forms linear homooligomers, giving rise to a RAD51 nucleoprotein filament, which is essential for strand-pairing reactions during DNA recombination.

Its subcellular location is the nucleus. It localises to the cytoplasm. The protein resides in the chromosome. In terms of biological role, plays an important role in homologous strand exchange, a key step in DNA repair through homologous recombination (HR). Binds to single-stranded DNA in an ATP-dependent manner to form nucleoprotein filaments which are essential for the homology search and strand exchange. Catalyzes the recognition of homology and strand exchange between homologous DNA partners to form a joint molecule between a processed DNA break and the repair template. Recruited to resolve stalled replication forks during replication stress. Also involved in interstrand cross-link repair. In Xenopus laevis (African clawed frog), this protein is DNA repair protein RAD51 homolog B (rad51-b).